A 31-amino-acid polypeptide reads, in one-letter code: Photosystem II reaction center protein T (31 aa).

Residues 3-23 traverse the membrane as a helical segment; it reads ALVYTFLLISTLGIIFFGIFF.

This sequence belongs to the PsbT family. In terms of assembly, PSII is composed of 1 copy each of membrane proteins PsbA, PsbB, PsbC, PsbD, PsbE, PsbF, PsbH, PsbI, PsbJ, PsbK, PsbL, PsbM, PsbT, PsbY, PsbZ, Psb30/Ycf12, at least 3 peripheral proteins of the oxygen-evolving complex and a large number of cofactors. It forms dimeric complexes.

The protein localises to the plastid. It is found in the chloroplast thylakoid membrane. In terms of biological role, found at the monomer-monomer interface of the photosystem II (PS II) dimer, plays a role in assembly and dimerization of PSII. PSII is a light-driven water plastoquinone oxidoreductase, using light energy to abstract electrons from H(2)O, generating a proton gradient subsequently used for ATP formation. The chain is Photosystem II reaction center protein T from Nephroselmis olivacea (Green alga).